We begin with the raw amino-acid sequence, 214 residues long: Thymidylate kinase (214 aa).

Position 10 to 17 (10 to 17) interacts with ATP; the sequence is GPDGAGKT.

The protein belongs to the thymidylate kinase family.

The catalysed reaction is dTMP + ATP = dTDP + ADP. In terms of biological role, phosphorylation of dTMP to form dTDP in both de novo and salvage pathways of dTTP synthesis. The protein is Thymidylate kinase of Levilactobacillus brevis (strain ATCC 367 / BCRC 12310 / CIP 105137 / JCM 1170 / LMG 11437 / NCIMB 947 / NCTC 947) (Lactobacillus brevis).